A 422-amino-acid chain; its full sequence is Golgi-associated RAB2 interactor protein 2 (422 aa).

Positions 353-404 (PVESEANTSKEMKDKTSEEKMPDFQSTALKAEESRSLRTESNTSVLSPHIKS) are disordered. The span at 360–374 (TSKEMKDKTSEEKMP) shows a compositional bias: basic and acidic residues.

It belongs to the GARIN family. Interacts with CALM1. Expressed in spermatozoa (at protein level).

It localises to the cell projection. It is found in the cilium. The protein localises to the flagellum. Functionally, seems to play a role in sperm motility. The polypeptide is Golgi-associated RAB2 interactor protein 2 (Homo sapiens (Human)).